A 941-amino-acid chain; its full sequence is Isoleucine--tRNA ligase (941 aa).

Residues 59–69 (PYANGNIHIGH) carry the 'HIGH' region motif. Glu562 serves as a coordination point for L-isoleucyl-5'-AMP. The 'KMSKS' region signature appears at 603–607 (KMSKS). Lys606 provides a ligand contact to ATP. 4 residues coordinate Zn(2+): Cys904, Cys907, Cys924, and Cys927.

It belongs to the class-I aminoacyl-tRNA synthetase family. IleS type 1 subfamily. In terms of assembly, monomer. Requires Zn(2+) as cofactor.

It is found in the cytoplasm. The catalysed reaction is tRNA(Ile) + L-isoleucine + ATP = L-isoleucyl-tRNA(Ile) + AMP + diphosphate. Its function is as follows. Catalyzes the attachment of isoleucine to tRNA(Ile). As IleRS can inadvertently accommodate and process structurally similar amino acids such as valine, to avoid such errors it has two additional distinct tRNA(Ile)-dependent editing activities. One activity is designated as 'pretransfer' editing and involves the hydrolysis of activated Val-AMP. The other activity is designated 'posttransfer' editing and involves deacylation of mischarged Val-tRNA(Ile). In Haemophilus influenzae (strain PittEE), this protein is Isoleucine--tRNA ligase.